Reading from the N-terminus, the 620-residue chain is UPF0313 protein BT_0254 (620 aa).

The Radical SAM core domain maps to 311-591; sequence AYDMIKFSVN…AQRQFFFWYK (281 aa). [4Fe-4S] cluster contacts are provided by C325, C329, and C332.

Belongs to the UPF0313 family. [4Fe-4S] cluster serves as cofactor.

The chain is UPF0313 protein BT_0254 from Bacteroides thetaiotaomicron (strain ATCC 29148 / DSM 2079 / JCM 5827 / CCUG 10774 / NCTC 10582 / VPI-5482 / E50).